A 72-amino-acid polypeptide reads, in one-letter code: Large ribosomal subunit protein bL31 (72 aa).

Residues Cys-16, Cys-18, Cys-38, and Cys-41 each coordinate Zn(2+).

The protein belongs to the bacterial ribosomal protein bL31 family. Type A subfamily. As to quaternary structure, part of the 50S ribosomal subunit. Requires Zn(2+) as cofactor.

In terms of biological role, binds the 23S rRNA. This Vibrio cholerae serotype O1 (strain ATCC 39541 / Classical Ogawa 395 / O395) protein is Large ribosomal subunit protein bL31.